Here is a 551-residue protein sequence, read N- to C-terminus: Probable metalloreductase AIM14 (551 aa).

The next 7 helical transmembrane spans lie at 25 to 45 (GIII…VKFI), 67 to 87 (PTWM…GANI), 100 to 117 (RYGR…YLIL), 138 to 155 (KWLS…AIGY), 172 to 192 (FLNF…IVSI), 199 to 221 (YYSL…IIFH), and 225 to 247 (GVTI…LRFY). A Ferric oxidoreductase domain is found at 102 to 217 (GRIAYCLLPL…NITAWSMVVL (116 aa)). In terms of domain architecture, FAD-binding FR-type spans 247–369 (YKSYPVNNLK…GGSGISFGLP (123 aa)). Residues 440-492 (QDESHAKVEQTQGEEEVDGLLNQDENGIPLQSMKKESFPKKEEGEDEEKSSKD) form a disordered region. A compositionally biased stretch (basic and acidic residues) spans 472–492 (MKKESFPKKEEGEDEEKSSKD).

Belongs to the ferric reductase (FRE) family. AIM14 subfamily.

It is found in the membrane. Probable cell surface metalloreductase. May be involved in iron or copper homeostasis. In Candida tropicalis (strain ATCC MYA-3404 / T1) (Yeast), this protein is Probable metalloreductase AIM14 (AIM14).